The chain runs to 220 residues: Translation initiation factor 6 (220 aa).

This sequence belongs to the eIF-6 family.

Functionally, binds to the 50S ribosomal subunit and prevents its association with the 30S ribosomal subunit to form the 70S initiation complex. The polypeptide is Translation initiation factor 6 (Halobacterium salinarum (strain ATCC 29341 / DSM 671 / R1)).